The following is a 263-amino-acid chain: Glucosamine-6-phosphate deaminase (263 aa).

The active-site Proton acceptor; for enolization step is the D67. Residue N136 is the For ring-opening step of the active site. H138 acts as the Proton acceptor; for ring-opening step in catalysis. E143 serves as the catalytic For ring-opening step.

Belongs to the glucosamine/galactosamine-6-phosphate isomerase family. NagB subfamily. As to quaternary structure, homohexamer.

The catalysed reaction is alpha-D-glucosamine 6-phosphate + H2O = beta-D-fructose 6-phosphate + NH4(+). The protein operates within amino-sugar metabolism; N-acetylneuraminate degradation; D-fructose 6-phosphate from N-acetylneuraminate: step 5/5. In terms of biological role, catalyzes the reversible isomerization-deamination of glucosamine 6-phosphate (GlcN6P) to form fructose 6-phosphate (Fru6P) and ammonium ion. In Shewanella halifaxensis (strain HAW-EB4), this protein is Glucosamine-6-phosphate deaminase.